Reading from the N-terminus, the 518-residue chain is Glutamate--cysteine ligase (518 aa).

Belongs to the glutamate--cysteine ligase type 1 family. Type 1 subfamily.

The catalysed reaction is L-cysteine + L-glutamate + ATP = gamma-L-glutamyl-L-cysteine + ADP + phosphate + H(+). Its pathway is sulfur metabolism; glutathione biosynthesis; glutathione from L-cysteine and L-glutamate: step 1/2. This Salmonella agona (strain SL483) protein is Glutamate--cysteine ligase.